Here is a 397-residue protein sequence, read N- to C-terminus: Ribosomal RNA large subunit methyltransferase I (397 aa).

The 80-residue stretch at 2-81 (SAQVILQPSR…ESIDNGFFLR (80 aa)) folds into the PUA domain.

This sequence belongs to the methyltransferase superfamily. RlmI family.

The protein resides in the cytoplasm. The enzyme catalyses cytidine(1962) in 23S rRNA + S-adenosyl-L-methionine = 5-methylcytidine(1962) in 23S rRNA + S-adenosyl-L-homocysteine + H(+). Functionally, specifically methylates the cytosine at position 1962 (m5C1962) of 23S rRNA. This is Ribosomal RNA large subunit methyltransferase I from Alteromonas mediterranea (strain DSM 17117 / CIP 110805 / LMG 28347 / Deep ecotype).